Consider the following 255-residue polypeptide: Protein C activator (255 aa).

The signal sequence occupies residues 1-18; sequence MVLIRVLANLLILHLSYA. Positions 19–24 are excised as a propeptide; the sequence is QKSSEL. Positions 25–246 constitute a Peptidase S1 domain; that stretch reads VIGGDECNIN…YTDWIQSIIS (222 aa). 6 disulfide bridges follow: Cys-31-Cys-162, Cys-49-Cys-65, Cys-97-Cys-253, Cys-141-Cys-207, Cys-173-Cys-186, and Cys-197-Cys-222. Residue Asn-45 is glycosylated (N-linked (GlcNAc...) asparagine). His-64 serves as the catalytic Charge relay system. Residue Asn-102 is glycosylated (N-linked (GlcNAc...) asparagine). The active-site Charge relay system is Asp-109. N-linked (GlcNAc...) asparagine glycosylation occurs at Asn-153. Ser-201 functions as the Charge relay system in the catalytic mechanism.

Belongs to the peptidase S1 family. Snake venom subfamily. Monomer. Expressed by the venom gland.

The protein resides in the secreted. In terms of biological role, snake venom serine protease that selectively cleaves the heavy chain of protein C (PROC). This activation is thrombomodulin-independent. In Agkistrodon piscivorus leucostoma (Western cottonmouth), this protein is Protein C activator.